The sequence spans 428 residues: Glutamate-1-semialdehyde 2,1-aminomutase (428 aa).

The residue at position 265 (lysine 265) is an N6-(pyridoxal phosphate)lysine.

Belongs to the class-III pyridoxal-phosphate-dependent aminotransferase family. HemL subfamily. As to quaternary structure, homodimer. Pyridoxal 5'-phosphate serves as cofactor.

The protein resides in the cytoplasm. It carries out the reaction (S)-4-amino-5-oxopentanoate = 5-aminolevulinate. It functions in the pathway porphyrin-containing compound metabolism; protoporphyrin-IX biosynthesis; 5-aminolevulinate from L-glutamyl-tRNA(Glu): step 2/2. The chain is Glutamate-1-semialdehyde 2,1-aminomutase from Thioalkalivibrio sulfidiphilus (strain HL-EbGR7).